The following is a 422-amino-acid chain: Mannose-1-phosphate guanylyltransferase regulatory subunit alpha-A (422 aa).

Residues 2–253 (LKAVILIGGP…DRFWSQIKSA (252 aa)) form a substrate-binding domain region. GDP-alpha-D-mannose contacts are provided by Glu-85 and Gln-249. The hexapeptide repeat domain stretch occupies residues 275-422 (LATNTEGGAK…NRSFKNQIIL (148 aa)). Residues 358–386 (TPSDPNPNDPYAKIDSETLFRDGKLTPSI) are C-loop.

This sequence belongs to the transferase hexapeptide repeat family. Component of the GMPPA-GMPPB mannose-1-phosphate guanylyltransferase complex composed of 4 gmppa subunits and 8 gmppb subunits; the complex is organized into three layers, a central layer made up of 2 gmppa dimers sandwiched between two layers each made up of 2 gmppb dimers.

It functions in the pathway nucleotide-sugar biosynthesis; GDP-alpha-D-mannose biosynthesis; GDP-alpha-D-mannose from alpha-D-mannose 1-phosphate (GTP route): step 1/1. Regulatory subunit of the GMPPA-GMPPB mannose-1-phosphate guanylyltransferase complex; reduces the catalytic activity of GMPPB when part of the complex. Mediates allosteric feedback inhibition of GMPPB catalytic activity upon binding GDP-alpha-D-mannose. Together with GMPPB regulates GDP-alpha-D-mannose levels. One of two paralogs (gmppaa and gmppab) that may have redundant functions. This Danio rerio (Zebrafish) protein is Mannose-1-phosphate guanylyltransferase regulatory subunit alpha-A (gmppaa).